The chain runs to 303 residues: Propanal dehydrogenase (CoA-propanoylating) (303 aa).

Position 12 to 15 (12 to 15) interacts with NAD(+); the sequence is SGNI. Residue Cys127 is the Acyl-thioester intermediate of the active site. Residues 158–166 and Asn277 contribute to the NAD(+) site; that span reads SAGPGTRAN.

The protein belongs to the acetaldehyde dehydrogenase family. Monomer. Forms a heterotetramer composed of two aldolase (HsaF) and two dehydrogenase (HsaG) subunits.

The catalysed reaction is propanal + NAD(+) + CoA = propanoyl-CoA + NADH + H(+). It catalyses the reaction acetaldehyde + NAD(+) + CoA = acetyl-CoA + NADH + H(+). Involved in cholesterol degradation. Catalyzes the conversion of propanal to propanoyl-CoA, using NAD(+) and coenzyme A. The protein is Propanal dehydrogenase (CoA-propanoylating) of Mycobacterium bovis (strain ATCC BAA-935 / AF2122/97).